We begin with the raw amino-acid sequence, 161 residues long: DNA-binding protein inhibitor ID-4 (161 aa).

Residues 52 to 104 (AAEAAADEPALCLQCDMNDCYSRLRRLVPTIPPNKKVSKVEILQHVIDYILDL) form the bHLH domain. Residues 117–126 (QPPPPAPPHH) are compositionally biased toward pro residues. The segment at 117–161 (QPPPPAPPHHPAGTCPAAPPRTPLTALNTDPAGAVNKQGDSILCR) is disordered.

As to quaternary structure, heterodimer with other HLH proteins.

The protein resides in the nucleus. Functionally, transcriptional regulator (lacking a basic DNA binding domain) which negatively regulates the basic helix-loop-helix (bHLH) transcription factors by forming heterodimers and inhibiting their DNA binding and transcriptional activity. Implicated in regulating a variety of cellular processes, including cellular growth, senescence, differentiation, apoptosis, angiogenesis, and neoplastic transformation. This chain is DNA-binding protein inhibitor ID-4 (ID4), found in Homo sapiens (Human).